The sequence spans 181 residues: Oligoribonuclease (181 aa).

The region spanning 8 to 171 (LIWIDLEMTG…DDIRESVAEL (164 aa)) is the Exonuclease domain. Tyr-129 is a catalytic residue.

The protein belongs to the oligoribonuclease family.

The protein localises to the cytoplasm. In terms of biological role, 3'-to-5' exoribonuclease specific for small oligoribonucleotides. This chain is Oligoribonuclease, found in Klebsiella pneumoniae subsp. pneumoniae (strain ATCC 700721 / MGH 78578).